Here is a 103-residue protein sequence, read N- to C-terminus: Large ribosomal subunit protein uL23 (103 aa).

It belongs to the universal ribosomal protein uL23 family. Part of the 50S ribosomal subunit. Contacts protein L29, and trigger factor when it is bound to the ribosome.

One of the early assembly proteins it binds 23S rRNA. One of the proteins that surrounds the polypeptide exit tunnel on the outside of the ribosome. Forms the main docking site for trigger factor binding to the ribosome. This chain is Large ribosomal subunit protein uL23, found in Aquifex aeolicus (strain VF5).